The chain runs to 103 residues: Small ribosomal subunit protein uS10c (103 aa).

Belongs to the universal ribosomal protein uS10 family. In terms of assembly, part of the 30S ribosomal subunit.

It is found in the plastid. The protein localises to the chloroplast. In terms of biological role, involved in the binding of tRNA to the ribosomes. This Trieres chinensis (Marine centric diatom) protein is Small ribosomal subunit protein uS10c.